The following is an 828-amino-acid chain: Kinesin-associated protein 3 (828 aa).

ARM repeat units follow at residues 332–372 (YVEN…NLSF), 373–411 (DTDLRGKMIKLGMLPKFVELLANDNHRLVVLCVLYHVSQ), and 577–611 (DDSCAAMLAKSGIIQSLIELLNAKQEDDEIVCQIV).

In terms of assembly, heterotrimer of a 115 kDa subunit (KAP115) and two kinesin-like subunits of 95 kDa (KRP95) and 85 kDa (KRP85).

Functionally, binds to the tail domain of the KRP85/KRP95 heterodimer to form a heterotrimeric kinesin-II complex and may regulate the spindle vesicle targeting of this complex. This is Kinesin-associated protein 3 (KAP115) from Strongylocentrotus purpuratus (Purple sea urchin).